The chain runs to 61 residues: MFTLKKPLLLLFFLGTINLSLCEQERNAEEERRDEPDERNAEVEKRFLPIVGKLLSGLLGK.

A signal peptide spans 1 to 22 (MFTLKKPLLLLFFLGTINLSLC). The propeptide at 23–44 (EQERNAEEERRDEPDERNAEVE) is removed in mature form. Leu-59 carries the leucine amide modification.

The protein belongs to the frog skin active peptide (FSAP) family. Temporin subfamily. As to expression, expressed by the skin glands.

It is found in the secreted. Antimicrobial peptide. The protein is Temporin-MT3 of Amolops mantzorum (Sichuan torrent frog).